A 165-amino-acid polypeptide reads, in one-letter code: 6,7-dimethyl-8-ribityllumazine synthase (165 aa).

Residues Trp26, 58–60 (SIE), and 80–82 (VVI) each bind 5-amino-6-(D-ribitylamino)uracil. 85–86 (GT) is a (2S)-2-hydroxy-3-oxobutyl phosphate binding site. The active-site Proton donor is His88. A 5-amino-6-(D-ribitylamino)uracil-binding site is contributed by Asn113. (2S)-2-hydroxy-3-oxobutyl phosphate is bound at residue Arg127.

The protein belongs to the DMRL synthase family.

It carries out the reaction (2S)-2-hydroxy-3-oxobutyl phosphate + 5-amino-6-(D-ribitylamino)uracil = 6,7-dimethyl-8-(1-D-ribityl)lumazine + phosphate + 2 H2O + H(+). The protein operates within cofactor biosynthesis; riboflavin biosynthesis; riboflavin from 2-hydroxy-3-oxobutyl phosphate and 5-amino-6-(D-ribitylamino)uracil: step 1/2. In terms of biological role, catalyzes the formation of 6,7-dimethyl-8-ribityllumazine by condensation of 5-amino-6-(D-ribitylamino)uracil with 3,4-dihydroxy-2-butanone 4-phosphate. This is the penultimate step in the biosynthesis of riboflavin. This chain is 6,7-dimethyl-8-ribityllumazine synthase, found in Saccharopolyspora erythraea (strain ATCC 11635 / DSM 40517 / JCM 4748 / NBRC 13426 / NCIMB 8594 / NRRL 2338).